Reading from the N-terminus, the 71-residue chain is Large ribosomal subunit protein uL29 (71 aa).

The segment at 1 to 20 (MKARELQELRQGSSPQDLQE) is disordered.

The protein belongs to the universal ribosomal protein uL29 family.

This Clostridium kluyveri (strain ATCC 8527 / DSM 555 / NBRC 12016 / NCIMB 10680 / K1) protein is Large ribosomal subunit protein uL29.